Here is a 2458-residue protein sequence, read N- to C-terminus: Highly reducing polyketide synthase alnA (2458 aa).

In terms of domain architecture, Ketosynthase family 3 (KS3) spans 48 to 473 (TMPIAIVGMA…GANAHVILDD (426 aa)). Active-site for beta-ketoacyl synthase activity residues include cysteine 221, histidine 356, and histidine 396. Residues 488 to 515 (HTTLSESEDSSDSGLEMDSSTSDSGEGQ) form a disordered region. Residues 499–515 (DSGLEMDSSTSDSGEGQ) show a composition bias toward low complexity. The interval 609-932 (VFTGQGAQWP…PYMSVLSRGK (324 aa)) is malonyl-CoA:ACP transacylase (MAT) domain. The active-site For malonyltransferase activity is the serine 697. The tract at residues 1000-1130 (NDLLGVPVAQ…GSFSLHYEDA (131 aa)) is N-terminal hotdog fold. Residues 1000–1307 (NDLLGVPVAQ…VTEVSAGAST (308 aa)) enclose the PKS/mFAS DH domain. Positions 1001–1305 (DLLGVPVAQQ…MTVTEVSAGA (305 aa)) are dehydratase (DH) domain. Histidine 1032 functions as the Proton acceptor; for dehydratase activity in the catalytic mechanism. Positions 1148–1307 (TRACRKLDVE…VTEVSAGAST (160 aa)) are C-terminal hotdog fold. The Proton donor; for dehydratase activity role is filled by aspartate 1218. Residues 1740–2051 (GSPSQARWVP…GQQQHERVAA (312 aa)) form an enoylreductase (ER) domain region. The tract at residues 2076–2264 (KPDATYILAG…VTDASHFNEN (189 aa)) is ketoreductase (KR) domain. The 83-residue stretch at 2359-2441 (STTVAQAHEV…RLALKIVSKS (83 aa)) folds into the Carrier domain. O-(pantetheine 4'-phosphoryl)serine is present on serine 2401.

The protein operates within polyketide biosynthesis. Functionally, highly reducing polyketide synthase; part of the gene cluster that mediates the biosynthesis of asperlin, a polyketide showing anti-inflammatory, antitumor and antibiotic activities. The first step of the asperlin biosynthesis is the production of the intermediate 2,4,6-octatrienoic acid by the highly redusing polyketide synthase alnA with cleavage of the PKS product by the esterase alnB. 2,4,6-octatrienoic acid is further converted to asperlin via several steps involving the remaining enzymes from the cluster. This Emericella nidulans (strain FGSC A4 / ATCC 38163 / CBS 112.46 / NRRL 194 / M139) (Aspergillus nidulans) protein is Highly reducing polyketide synthase alnA.